An 879-amino-acid polypeptide reads, in one-letter code: DNA methyltransferase A (879 aa).

This sequence belongs to the methyltransferase superfamily.

It carries out the reaction a 2'-deoxyadenosine in DNA + S-adenosyl-L-methionine = an N(6)-methyl-2'-deoxyadenosine in DNA + S-adenosyl-L-homocysteine + H(+). Its function is as follows. Recognizes the double-stranded sequence 5'-GACGAG-3' and methylates A-5, yielding m6A. m6A methylation functions as a transcriptional modifier, promoting transcription of a number of genes (at least scpA, hbs, rnhC, yumC and zapA). One studied mechanism is via transcriptional repressor ScoC (also called hpr) which binds to non-methylated scpA promoter; when the m6A target is methylated ScoC no longer binds and scpA transcription is up-regulated. Other mechanisms for gene expression regulation probably exist. Binds DNA with and without the target sequence. Although it resembles a restriction-modification system, it does not have detectable endonuclease activity under tested conditions. A gamma subtype methylase. The chain is DNA methyltransferase A from Bacillus subtilis (strain 168).